We begin with the raw amino-acid sequence, 212 residues long: GTP-binding nuclear protein Ran (212 aa).

In terms of domain architecture, Small GTPase Ran-type spans E3 to N167. D14–T21 lines the GTP pocket. The interval P33–V41 is switch-I. Residues G64, N118 to D121, and S146 to K148 each bind GTP. A switch-II region spans residues G64–N80.

The protein belongs to the small GTPase superfamily. Ran family. In terms of assembly, found in a nuclear export complex with RanGTP, exportin and pre-miRNA.

The protein resides in the nucleus. In terms of biological role, GTP-binding protein involved in nucleocytoplasmic transport. Required for the import of protein into the nucleus and also for RNA export. Involved in chromatin condensation and control of cell cycle. In Dictyostelium discoideum (Social amoeba), this protein is GTP-binding nuclear protein Ran (ranA).